A 273-amino-acid chain; its full sequence is Ciliary microtubule inner protein 2B (273 aa).

Disordered regions lie at residues T59 to R85 and R123 to P164. Positions R123–L159 are enriched in basic and acidic residues.

Belongs to the CIMIP2 family. As to quaternary structure, microtubule inner protein component of sperm flagellar doublet microtubules. In terms of tissue distribution, expressed in airway epithelial cells.

It localises to the cytoplasm. It is found in the cytoskeleton. The protein localises to the cilium axoneme. Its subcellular location is the flagellum axoneme. Microtubule inner protein (MIP) part of the dynein-decorated doublet microtubules (DMTs) in cilia axoneme, which is required for motile cilia beating. In Mus musculus (Mouse), this protein is Ciliary microtubule inner protein 2B (Cimip2b).